A 360-amino-acid chain; its full sequence is 3-dehydroquinate synthase (360 aa).

Residues 104–108 (GVIGD), 128–129 (TT), Lys-141, and 168–171 (FLDT) each bind NAD(+). Positions 183, 243, and 260 each coordinate Zn(2+).

This sequence belongs to the sugar phosphate cyclases superfamily. Dehydroquinate synthase family. Requires Co(2+) as cofactor. The cofactor is Zn(2+). It depends on NAD(+) as a cofactor.

It localises to the cytoplasm. The catalysed reaction is 7-phospho-2-dehydro-3-deoxy-D-arabino-heptonate = 3-dehydroquinate + phosphate. It functions in the pathway metabolic intermediate biosynthesis; chorismate biosynthesis; chorismate from D-erythrose 4-phosphate and phosphoenolpyruvate: step 2/7. In terms of biological role, catalyzes the conversion of 3-deoxy-D-arabino-heptulosonate 7-phosphate (DAHP) to dehydroquinate (DHQ). This chain is 3-dehydroquinate synthase, found in Streptococcus equi subsp. equi (strain 4047).